A 99-amino-acid polypeptide reads, in one-letter code: DNA/RNA-binding protein Alba 1 (99 aa).

Residue Lys-17 is modified to N6-acetyllysine.

This sequence belongs to the histone-like Alba family. Post-translationally, acetylated. Acetylation at Lys-17 decreases DNA-binding affinity.

The protein localises to the cytoplasm. It localises to the chromosome. Binds double-stranded DNA tightly but without sequence specificity. Involved in DNA compaction. This chain is DNA/RNA-binding protein Alba 1, found in Sulfurisphaera tokodaii (strain DSM 16993 / JCM 10545 / NBRC 100140 / 7) (Sulfolobus tokodaii).